The sequence spans 115 residues: Large ribosomal subunit protein uL22c (115 aa).

It belongs to the universal ribosomal protein uL22 family. As to quaternary structure, part of the 50S ribosomal subunit.

The protein resides in the plastid. It is found in the chloroplast. In terms of biological role, this protein binds specifically to 23S rRNA. Its function is as follows. The globular domain of the protein is located near the polypeptide exit tunnel on the outside of the subunit, while an extended beta-hairpin is found that lines the wall of the exit tunnel in the center of the 70S ribosome. In Thalassiosira pseudonana (Marine diatom), this protein is Large ribosomal subunit protein uL22c (rpl22).